The chain runs to 596 residues: MPLPESVGDLVVLHFETNLDDHGISIGRAPCEIHEICWVILDGKTLEKQHCESCSIREDSSRHGICGSASSLTEAIFTLDNSIQERLNFQGKPFTFVVMNGRELRVLLPKEARDQGITLPSYMRHPRLFDLSSEYAKWQIRMGAVPPYTITLSHIFGKLDVDSLPPITESKAIELSPSDAPYITKGLTQCWRLANATTLLLRKAEKDSRGHSLPSVLTQPINCQADARSFYAERSKIVHVAGLTNDVTQLELESWFTNHGVHPVALWTLKTPEPYKSTGTGFVLFASHEDAADALAFNGYCLGDRMLEIIPSSTKVLDKASDILIPFPSSKNRPRPGDWNCPMCGFSNFQRRTSCFRCSFPGPTHVSAATGSNTFSPDFPYGNSYGNGSSHFIANYGGSVHHSNENTMQSDLQHQNGNNAVNHHHSSRSFGGNVPFRAGDWKCGSEGCGYHNFAKNVCCLRCGASRATAAVVADHASGPVNGSYSHNSYSHIPPVMSTSPPNHSVYPYSQLSINSVTANHGQNFGGQNGGNVSRFDDHGRFKEVSRPSVTTDQGDWLCECGFTNFRRRSNCLRCNAPHYSNMQIPASLPSDFNAYV.

Phosphoserine is present on Ser-176. The RRM domain occupies Lys-236–Thr-314. The segment at Arg-335–Thr-364 adopts a RanBP2-type 1 zinc-finger fold. Ser-429 is modified (phosphoserine). RanBP2-type zinc fingers lie at residues Arg-437 to Thr-468 and Asp-552 to Ser-580.

In terms of assembly, interacts with dpb4. Interacts with chp1.

Its subcellular location is the chromosome. The protein resides in the nucleus. It localises to the cytoplasm. It is found in the cytoplasmic granule. Mediates heterochromatin assembly by promoting RNAi-mediated heterochromatin silencing and histone deacetylation. Binds pericetromeric transcripts and recruits the RNA-induced transcriptional silencing (RITS) complex to heterochromatin. Recruits sir2 to chromatin to promote deacetylation of 'Lys-9' of histone H3. Involved in bipolar spindle assembly during mitosis. Required for proper localization of kinesin-14/Klp2 on the spindle microtubules. The polypeptide is RNA-binding protein involved in heterochromatin assembly dri1 (Schizosaccharomyces pombe (strain 972 / ATCC 24843) (Fission yeast)).